The primary structure comprises 472 residues: Aspartyl/glutamyl-tRNA(Asn/Gln) amidotransferase subunit B (472 aa).

It belongs to the GatB/GatE family. GatB subfamily. In terms of assembly, heterotrimer of A, B and C subunits.

The enzyme catalyses L-glutamyl-tRNA(Gln) + L-glutamine + ATP + H2O = L-glutaminyl-tRNA(Gln) + L-glutamate + ADP + phosphate + H(+). It carries out the reaction L-aspartyl-tRNA(Asn) + L-glutamine + ATP + H2O = L-asparaginyl-tRNA(Asn) + L-glutamate + ADP + phosphate + 2 H(+). Functionally, allows the formation of correctly charged Asn-tRNA(Asn) or Gln-tRNA(Gln) through the transamidation of misacylated Asp-tRNA(Asn) or Glu-tRNA(Gln) in organisms which lack either or both of asparaginyl-tRNA or glutaminyl-tRNA synthetases. The reaction takes place in the presence of glutamine and ATP through an activated phospho-Asp-tRNA(Asn) or phospho-Glu-tRNA(Gln). This Sulfolobus acidocaldarius (strain ATCC 33909 / DSM 639 / JCM 8929 / NBRC 15157 / NCIMB 11770) protein is Aspartyl/glutamyl-tRNA(Asn/Gln) amidotransferase subunit B.